A 185-amino-acid chain; its full sequence is HTH-type transcriptional repressor OpcR (185 aa).

A DNA-binding region (H-T-H motif) is located at residues 49-73 (LSELSEATGMSKTRMSQVVREMIDA).

This sequence belongs to the GbsR family.

Is not choline-responsive. Its function is as follows. Negatively regulates the transcription of the opuC operon. In the absence of GbsR, is also a negative regulator of the opuB operon. Binds to an inverted repeat in the promoter region of the operons. This Bacillus subtilis (strain 168) protein is HTH-type transcriptional repressor OpcR (opcR).